A 469-amino-acid chain; its full sequence is Ribulose bisphosphate carboxylase large chain (469 aa).

K5 bears the N6,N6,N6-trimethyllysine mark. Substrate-binding residues include N114 and T164. The Proton acceptor role is filled by K166. K168 serves as a coordination point for substrate. K192, D194, and E195 together coordinate Mg(2+). K192 is modified (N6-carboxylysine). The active-site Proton acceptor is H285. Positions 286, 318, and 370 each coordinate substrate.

It belongs to the RuBisCO large chain family. Type I subfamily. In terms of assembly, heterohexadecamer of 8 large chains and 8 small chains; disulfide-linked. The disulfide link is formed within the large subunit homodimers. Mg(2+) serves as cofactor. Post-translationally, the disulfide bond which can form in the large chain dimeric partners within the hexadecamer appears to be associated with oxidative stress and protein turnover.

The protein resides in the plastid. It localises to the chloroplast. The catalysed reaction is 2 (2R)-3-phosphoglycerate + 2 H(+) = D-ribulose 1,5-bisphosphate + CO2 + H2O. It catalyses the reaction D-ribulose 1,5-bisphosphate + O2 = 2-phosphoglycolate + (2R)-3-phosphoglycerate + 2 H(+). Functionally, ruBisCO catalyzes two reactions: the carboxylation of D-ribulose 1,5-bisphosphate, the primary event in carbon dioxide fixation, as well as the oxidative fragmentation of the pentose substrate in the photorespiration process. Both reactions occur simultaneously and in competition at the same active site. This chain is Ribulose bisphosphate carboxylase large chain, found in Cephalanthus occidentalis (Common buttonbush).